A 107-amino-acid polypeptide reads, in one-letter code: Integration host factor subunit beta (107 aa).

The disordered stretch occupies residues 87 to 107 (RERVNNGTRKNGGSADAASGG).

This sequence belongs to the bacterial histone-like protein family. In terms of assembly, heterodimer of an alpha and a beta chain.

Its function is as follows. This protein is one of the two subunits of integration host factor, a specific DNA-binding protein that functions in genetic recombination as well as in transcriptional and translational control. This is Integration host factor subunit beta from Granulibacter bethesdensis (strain ATCC BAA-1260 / CGDNIH1).